A 1447-amino-acid chain; its full sequence is MFRAGEASKRPLPGPSPPRVRSVEVARGRAGYGFTLSGQAPCVLSCVMRGSPADFVGLRAGDQILAVNEINVKKASHEDVVKLIGKCSGVLHMVIAEGVGRFESCSSDEEGGLYEGKGWLKPKLDSKALGINRAERVVEEMQSGGIFNMIFENPSLCASNSEPLKLKQRSLSESAATRFDVGHESINNPNPNMLSKEEISKVIHDDSVFSIGLESHDDFALDASILNVAMIVGYLGSIELPSTSSNLESDSLQAIRGCMRRLRAEQKIHSLVTMKIMHDCVQLSTDKAGVVAEYPAEKLAFSAVCPDDRRFFGLVTMQTNDDGSLAQEEEGALRTSCHVFMVDPDLFNHKIHQGIARRFGFECTADPDTNGCLEFPASSLPVLQFISVLYRDMGELIEGMRARAFLDGDADAHQNNSTSSNSDSGIGNFHQEEKSNRVLVVDLGGSSSRHGPGGSAWDGVGGRGAQPWGAPWTGPFCPDPEGSPPFEAAHQTDRFWDLNKHLGPASPVEVPPASLRSSVPPSKRGTVGAGCGFNQRWLPVHVLREWQCGHTSDQDSYTDSTDGWSSINCGTLPPPMSKIPADRYRVEGSFAQPPLNAPKREWSRKAFGMQSIFGPHRNVRKTKEDKKGSKFGRGTGLTQPSQRTSARRSFGRSKRFSITRSLDDLESATVSDGELTGADLKDCVSNNSLSSNASLPSVQSCRRLRERRVASWAVSFERLLQDPVGVRYFSDFLRKEFSEENILFWQACEYFNHVPAHDKKELSYRAREIFSKFLCSKATTPVNIDSQAQLADDVLRAPHPDMFKEQQLQIFNLMKFDSYTRFLKSPLYQECILAEVEGRALPDSQQVPSSPASKHSLGSDHSSVSTPKKLSGKSKSGRSLNEELGDEDSEKKRKGAFFSWSRTRSTGRSQKKREHGDHADDALHANGGLCRRESQGSVSSAGSLDLSEACRTLAPEKDKATKHCCIHLPDGTSCVVAVKAGFSIKDILSGLCERHGINGAAADLFLVGGDKPLVLHQDSSILESRDLRLEKRTLFRLDLVPINRSVGLKAKPTKPVTEVLRPVVARYGLDLSGLLVRLSGEKEPLDLGAPISSLDGQRVVLEEKDPSRGKASADKQKGVPVKQNTAVNSSSRNHSATGEERTLGKSNSIKIKGENGKNARDPRLSKREESIAKIGKKKYQKINLDEAEEFFELISKAQSNRADDQRGLLRKEDLVLPEFLRLPPGSTELTLPTPAAVAKGFSKRSATGNGRESASQPGEQWEPVQESSDSPSTSPGSASSPPGPPGTTPPGQKSPSGPFCTPQSPVSLAQEGTAQIWKRQSQEVEAGGIQTVEDEHVAELTLMGEGDISSPNSTLLPPPSTPQEVPGPSRPGSGTHGSRDLPVNRIIDVDLVTGSAPGRDGGIAGAQAGPGRSQASGGPPTSDLPGLGPVPGEPAKPKTSAHHATFV.

Positions 1-21 are disordered; the sequence is MFRAGEASKRPLPGPSPPRVR. The 77-residue stretch at 22–98 folds into the PDZ domain; it reads SVEVARGRAG…GVLHMVIAEG (77 aa). A phosphoserine mark is found at Ser172 and Ser195. Lys196 participates in a covalent cross-link: Glycyl lysine isopeptide (Lys-Gly) (interchain with G-Cter in SUMO2). The PID domain maps to 228–340; sequence VAMIVGYLGS…GALRTSCHVF (113 aa). Disordered regions lie at residues 410-429 and 443-482; these read ADAHQNNSTSSNSDSGIGNF and LGGSSSRHGPGGSAWDGVGGRGAQPWGAPWTGPFCPDPEG. Positions 413–425 are enriched in polar residues; it reads HQNNSTSSNSDSG. The span at 451 to 464 shows a compositional bias: gly residues; the sequence is GPGGSAWDGVGGRG. 2 positions are modified to omega-N-methylarginine: Arg524 and Arg633. A disordered region spans residues 618–652; sequence NVRKTKEDKKGSKFGRGTGLTQPSQRTSARRSFGR. Phosphoserine is present on residues Ser661 and Ser671. One can recognise an RGS domain in the interval 715–832; sequence SFERLLQDPV…LKSPLYQECI (118 aa). Polar residues predominate over residues 843 to 853; sequence DSQQVPSSPAS. The tract at residues 843-941 is disordered; that stretch reads DSQQVPSSPA…RESQGSVSSA (99 aa). Residues Ser850 and Ser879 each carry the phosphoserine modification. Residues 914 to 923 show a composition bias toward basic and acidic residues; the sequence is EHGDHADDAL. A Phosphoserine modification is found at Ser943. RBD domains lie at 962 to 1032 and 1034 to 1104; these read KHCC…LEKR and LFRL…LEEK. Residues 1103-1117 are compositionally biased toward basic and acidic residues; that stretch reads EKDPSRGKASADKQK. The interval 1103–1169 is disordered; that stretch reads EKDPSRGKAS…RDPRLSKREE (67 aa). Over residues 1122-1136 the composition is skewed to polar residues; the sequence is KQNTAVNSSSRNHSA. Positions 1151-1169 are enriched in basic and acidic residues; it reads IKGENGKNARDPRLSKREE. Positions 1187 to 1209 constitute a GoLoco domain; the sequence is AEEFFELISKAQSNRADDQRGLL. Residues 1240–1447 are disordered; that stretch reads GFSKRSATGN…KTSAHHATFV (208 aa). Residues 1244–1258 are compositionally biased toward polar residues; sequence RSATGNGRESASQPG. Composition is skewed to low complexity over residues 1267 to 1280 and 1289 to 1298; these read SSDSPSTSPGSASS and PPGQKSPSGP. Polar residues predominate over residues 1301–1313; the sequence is TPQSPVSLAQEGT.

As to quaternary structure, interacts with GNAI1. Interacts with GNAI2 and GNAI3; the interactions are GDP-dependent. As to expression, isoform 3 is brain specific.

The protein resides in the nucleus. Its subcellular location is the cytoplasm. The protein localises to the cell projection. It localises to the dendrite. It is found in the synapse. The protein resides in the nucleus matrix. Functionally, regulates G protein-coupled receptor signaling cascades. Inhibits signal transduction by increasing the GTPase activity of G protein alpha subunits, thereby driving them into their inactive GDP-bound form. Its function is as follows. Behaves as a cell cycle-dependent transcriptional repressor, promoting inhibition of S-phase DNA synthesis. This Homo sapiens (Human) protein is Regulator of G-protein signaling 12 (RGS12).